We begin with the raw amino-acid sequence, 431 residues long: 3-phosphoshikimate 1-carboxyvinyltransferase (431 aa).

Positions 21, 22, and 26 each coordinate 3-phosphoshikimate. A phosphoenolpyruvate-binding site is contributed by Lys-21. Phosphoenolpyruvate is bound by residues Gly-94 and Arg-122. 3-phosphoshikimate contacts are provided by Ser-167, Gln-169, Asp-315, and Lys-342. Gln-169 contacts phosphoenolpyruvate. Asp-315 acts as the Proton acceptor in catalysis. The phosphoenolpyruvate site is built by Arg-346 and Arg-388.

The protein belongs to the EPSP synthase family. As to quaternary structure, monomer.

It is found in the cytoplasm. It carries out the reaction 3-phosphoshikimate + phosphoenolpyruvate = 5-O-(1-carboxyvinyl)-3-phosphoshikimate + phosphate. The protein operates within metabolic intermediate biosynthesis; chorismate biosynthesis; chorismate from D-erythrose 4-phosphate and phosphoenolpyruvate: step 6/7. Its function is as follows. Catalyzes the transfer of the enolpyruvyl moiety of phosphoenolpyruvate (PEP) to the 5-hydroxyl of shikimate-3-phosphate (S3P) to produce enolpyruvyl shikimate-3-phosphate and inorganic phosphate. This chain is 3-phosphoshikimate 1-carboxyvinyltransferase, found in Pelotomaculum thermopropionicum (strain DSM 13744 / JCM 10971 / SI).